The following is a 239-amino-acid chain: tRNA (guanine-N(7)-)-methyltransferase (239 aa).

Residues Glu-69, Glu-94, Asp-121, and Asp-144 each contribute to the S-adenosyl-L-methionine site. The active site involves Asp-144. Lys-148 is a binding site for substrate. Residues 150–155 (RHNKRR) are interaction with RNA. Residues Asp-180 and 217–220 (TKFE) contribute to the substrate site.

It belongs to the class I-like SAM-binding methyltransferase superfamily. TrmB family. As to quaternary structure, monomer.

The enzyme catalyses guanosine(46) in tRNA + S-adenosyl-L-methionine = N(7)-methylguanosine(46) in tRNA + S-adenosyl-L-homocysteine. It participates in tRNA modification; N(7)-methylguanine-tRNA biosynthesis. Functionally, catalyzes the formation of N(7)-methylguanine at position 46 (m7G46) in tRNA. The polypeptide is tRNA (guanine-N(7)-)-methyltransferase (Yersinia pseudotuberculosis serotype I (strain IP32953)).